Here is a 623-residue protein sequence, read N- to C-terminus: Procollagen galactosyltransferase 1 (623 aa).

An N-terminal signal peptide occupies residues 1–30 (MAAAPRACKGHGRPLPVLLLLLLLALPPLG). 3 N-linked (GlcNAc...) asparagine glycosylation sites follow: Asn97, Asn185, and Asn382. A compositionally biased stretch (basic and acidic residues) spans 589–607 (RAKSQKMREQQALSREAKN). The segment at 589-623 (RAKSQKMREQQALSREAKNSDVLQSPLDSAARDEL) is disordered. A Prevents secretion from ER motif is present at residues 620-623 (RDEL).

This sequence belongs to the glycosyltransferase 25 family. Post-translationally, N-glycosylated.

The protein localises to the endoplasmic reticulum lumen. It catalyses the reaction (5R)-5-hydroxy-L-lysyl-[collagen] + UDP-alpha-D-galactose = (5R)-5-O-(beta-D-galactosyl)-5-hydroxy-L-lysyl-[collagen] + UDP + H(+). Its function is as follows. Beta-galactosyltransferase that transfers beta-galactose to hydroxylysine residues of type I collagen. By acting on collagen glycosylation, facilitates the formation of collagen triple helix. Also involved in the biosynthesis of collagen type IV. The polypeptide is Procollagen galactosyltransferase 1 (COLGALT1) (Bos taurus (Bovine)).